Reading from the N-terminus, the 390-residue chain is GTPase Obg (390 aa).

An Obg domain is found at 1–159 (MKFVDEASIL…RDLLLELMLL (159 aa)). Residues 127 to 147 (NTRFKSSVNRTPRQKTNGTPG) form a disordered region. Residues 129–145 (RFKSSVNRTPRQKTNGT) are compositionally biased toward polar residues. The 174-residue stretch at 160–333 (ADVGMLGMPN…LCWDVMTFII (174 aa)) folds into the OBG-type G domain. GTP-binding positions include 166–173 (GMPNAGKS), 191–195 (FTTLV), 213–216 (DIPG), 283–286 (NKID), and 314–316 (SAA). Positions 173 and 193 each coordinate Mg(2+).

It belongs to the TRAFAC class OBG-HflX-like GTPase superfamily. OBG GTPase family. Monomer. Requires Mg(2+) as cofactor.

It localises to the cytoplasm. An essential GTPase which binds GTP, GDP and possibly (p)ppGpp with moderate affinity, with high nucleotide exchange rates and a fairly low GTP hydrolysis rate. Plays a role in control of the cell cycle, stress response, ribosome biogenesis and in those bacteria that undergo differentiation, in morphogenesis control. The polypeptide is GTPase Obg (Salmonella gallinarum (strain 287/91 / NCTC 13346)).